The chain runs to 347 residues: NADH-quinone oxidoreductase subunit H (347 aa).

The next 8 membrane-spanning stretches (helical) occupy residues 25–45, 95–115, 128–148, 168–188, 200–220, 251–271, 284–304, and 324–344; these read ILFM…VAAM, FMFT…FAII, IGIL…LFGG, ISYE…TGSF, GWYI…GVAV, FFIG…CLFF, FIPP…MFIL, and VCLP…LIFS.

This sequence belongs to the complex I subunit 1 family. As to quaternary structure, NDH-1 is composed of 14 different subunits. Subunits NuoA, H, J, K, L, M, N constitute the membrane sector of the complex.

It localises to the cell inner membrane. The enzyme catalyses a quinone + NADH + 5 H(+)(in) = a quinol + NAD(+) + 4 H(+)(out). Functionally, NDH-1 shuttles electrons from NADH, via FMN and iron-sulfur (Fe-S) centers, to quinones in the respiratory chain. The immediate electron acceptor for the enzyme in this species is believed to be ubiquinone. Couples the redox reaction to proton translocation (for every two electrons transferred, four hydrogen ions are translocated across the cytoplasmic membrane), and thus conserves the redox energy in a proton gradient. This subunit may bind ubiquinone. This Psychrobacter arcticus (strain DSM 17307 / VKM B-2377 / 273-4) protein is NADH-quinone oxidoreductase subunit H.